A 428-amino-acid chain; its full sequence is Glutamate-1-semialdehyde 2,1-aminomutase (428 aa).

Position 265 is an N6-(pyridoxal phosphate)lysine (lysine 265).

It belongs to the class-III pyridoxal-phosphate-dependent aminotransferase family. HemL subfamily. As to quaternary structure, homodimer. Pyridoxal 5'-phosphate serves as cofactor.

It is found in the cytoplasm. It catalyses the reaction (S)-4-amino-5-oxopentanoate = 5-aminolevulinate. It functions in the pathway porphyrin-containing compound metabolism; protoporphyrin-IX biosynthesis; 5-aminolevulinate from L-glutamyl-tRNA(Glu): step 2/2. This is Glutamate-1-semialdehyde 2,1-aminomutase from Legionella pneumophila (strain Paris).